Consider the following 192-residue polypeptide: UPF0149 protein YgfB (192 aa).

Belongs to the UPF0149 family.

The chain is UPF0149 protein YgfB from Salmonella typhi.